A 298-amino-acid chain; its full sequence is Estradiol 17-beta-dehydrogenase 11 (298 aa).

The first 21 residues, 1-21 (MKYLLDLILLLPLLIVFSIES), serve as a signal peptide directing secretion. 40-64 (LITGAGHGIGRLTAYEFAKLNTKLV) serves as a coordination point for NADP(+). Substrate is bound at residue Ser172. The Proton acceptor role is filled by Tyr185.

Belongs to the short-chain dehydrogenases/reductases (SDR) family. 17-beta-HSD 3 subfamily. Expressed in the liver (at protein level). Also expressed in the intestine and, at much lower levels, in the kidney.

The protein localises to the endoplasmic reticulum. Its subcellular location is the lipid droplet. The enzyme catalyses 17beta-estradiol + NAD(+) = estrone + NADH + H(+). It carries out the reaction 17beta-estradiol + NADP(+) = estrone + NADPH + H(+). In terms of biological role, can convert androstan-3-alpha,17-beta-diol (3-alpha-diol) to androsterone in vitro, suggesting that it may participate in androgen metabolism during steroidogenesis. May act by metabolizing compounds that stimulate steroid synthesis and/or by generating metabolites that inhibit it. Has no activity toward DHEA (dehydroepiandrosterone), or A-dione (4-androste-3,17-dione), and only a slight activity toward testosterone to A-dione. The sequence is that of Estradiol 17-beta-dehydrogenase 11 (Hsd17b11) from Mus musculus (Mouse).